Reading from the N-terminus, the 185-residue chain is Pro-adrenomedullin (185 aa).

The first 21 residues, 1-21, serve as a signal peptide directing secretion; sequence MKLVSIALMLLGSLAVLGADT. Arg-41 bears the Arginine amide mark. The propeptide occupies 45 to 91; sequence ELQASSSYPTGLVDEKTVPTQTLGLQDKQSTSSTPQASTQSTAHIRV. Positions 68–89 are disordered; sequence GLQDKQSTSSTPQASTQSTAHI. Over residues 73–87 the composition is skewed to low complexity; sequence QSTSSTPQASTQSTA. Cys-107 and Cys-112 are disulfide-bonded. The disordered stretch occupies residues 125-185; that stretch reads TDKDKDGMAP…HQDISRVSRL (61 aa). The residue at position 143 (Tyr-143) is a Tyrosine amide. A propeptide spans 150-185 (preproAM C-terminal fragment); the sequence is SLPEVLRARTVESSQEQTHSAPASPAHQDISRVSRL. Over residues 160–170 the composition is skewed to polar residues; it reads VESSQEQTHSA.

The protein belongs to the adrenomedullin family. In terms of tissue distribution, expressed in adrenal glands, lung, kidney, heart, spleen, duodenum and submandibular glands.

The protein resides in the secreted. Functionally, adrenomedullin/ADM and proadrenomedullin N-20 terminal peptide/PAMP are peptide hormones that act as potent hypotensive and vasodilatator agents. Numerous actions have been reported most related to the physiologic control of fluid and electrolyte homeostasis. ADM function is mediated by the CALCRL-RAMP2 and CALCRL-RAMP3 receptor complexes with ADM showing the highest potency for the CALCRL-RAMP2 complex. This chain is Pro-adrenomedullin, found in Rattus norvegicus (Rat).